Reading from the N-terminus, the 254-residue chain is Putative electron transfer flavoprotein subunit YdiQ (254 aa).

It belongs to the ETF beta-subunit/FixA family. YdiR and YdiQ form a heterodimer.

In terms of biological role, may play a role in a redox process. The polypeptide is Putative electron transfer flavoprotein subunit YdiQ (ydiQ) (Escherichia coli (strain K12)).